The following is a 90-amino-acid chain: Co-chaperonin GroES (90 aa).

It belongs to the GroES chaperonin family. As to quaternary structure, heptamer of 7 subunits arranged in a ring. Interacts with the chaperonin GroEL.

It is found in the cytoplasm. In terms of biological role, together with the chaperonin GroEL, plays an essential role in assisting protein folding. The GroEL-GroES system forms a nano-cage that allows encapsulation of the non-native substrate proteins and provides a physical environment optimized to promote and accelerate protein folding. GroES binds to the apical surface of the GroEL ring, thereby capping the opening of the GroEL channel. The chain is Co-chaperonin GroES from Bacteroides fragilis (strain ATCC 25285 / DSM 2151 / CCUG 4856 / JCM 11019 / LMG 10263 / NCTC 9343 / Onslow / VPI 2553 / EN-2).